We begin with the raw amino-acid sequence, 729 residues long: Catalase-peroxidase (729 aa).

The segment at 1–20 is disordered; sequence MHNGSNGSVEQRDSMPETSR. Positions 10-20 are enriched in basic and acidic residues; sequence EQRDSMPETSR. Positions 91–214 form a cross-link, tryptophyl-tyrosyl-methioninium (Trp-Tyr) (with M-240); the sequence is WHAAGTYRTT…LGATVMGLIY (124 aa). The active-site Proton acceptor is the His92. Positions 214-240 form a cross-link, tryptophyl-tyrosyl-methioninium (Tyr-Met) (with W-91); it reads YVNPEGPESTPDPEWSAQRIRKSFGRM. His255 is a binding site for heme b.

The protein belongs to the peroxidase family. Peroxidase/catalase subfamily. In terms of assembly, homodimer or homotetramer. Heme b is required as a cofactor. In terms of processing, formation of the three residue Trp-Tyr-Met cross-link is important for the catalase, but not the peroxidase activity of the enzyme.

The catalysed reaction is H2O2 + AH2 = A + 2 H2O. It carries out the reaction 2 H2O2 = O2 + 2 H2O. In terms of biological role, bifunctional enzyme with both catalase and broad-spectrum peroxidase activity. The protein is Catalase-peroxidase of Salinibacter ruber (strain DSM 13855 / M31).